Consider the following 196-residue polypeptide: Transcriptional regulatory protein UhpA (196 aa).

In terms of domain architecture, Response regulatory spans 3–116 (TVALIDDHLI…ELIAAVHTVA (114 aa)). At Asp54 the chain carries 4-aspartylphosphate. The HTH luxR-type domain maps to 131 to 196 (AAGRQDPLTK…ELAHRMFDGW (66 aa)). Positions 155 to 174 (VKEIAAELGLSPKTVHVHRA) form a DNA-binding region, H-T-H motif.

In terms of processing, phosphorylated and dephosphorylated by UhpB.

The protein resides in the cytoplasm. Its function is as follows. Part of the UhpABC signaling cascade that controls the expression of the hexose phosphate transporter UhpT. Activates the transcription of the uhpT gene. Acts by binding specifically to the uhpT promoter region. This Salmonella typhimurium (strain LT2 / SGSC1412 / ATCC 700720) protein is Transcriptional regulatory protein UhpA (uhpA).